The primary structure comprises 110 residues: Glutaredoxin-1 (110 aa).

Residues 7–110 enclose the Glutaredoxin domain; it reads IKHVKDLIAE…EELLEPILAN (104 aa). Residue K11 forms a Glycyl lysine isopeptide (Lys-Gly) (interchain with G-Cter in ubiquitin) linkage. Glutathione contacts are provided by residues 24–29, Q63, V75, and 88–89; these read KTYCPY and ND. An S-glutathionyl cysteine; alternate modification is found at C27. C27 and C30 form a disulfide bridge.

This sequence belongs to the glutaredoxin family.

It is found in the cytoplasm. The protein resides in the nucleus. The enzyme catalyses 2 glutathione + H2O2 = glutathione disulfide + 2 H2O. It catalyses the reaction 1-chloro-2,4-dinitrobenzene + glutathione = 2,4-dinitrophenyl-S-glutathione + chloride + H(+). The catalysed reaction is RX + glutathione = an S-substituted glutathione + a halide anion + H(+). In terms of biological role, component of the glutathione system which performs several activities such as glutathione-dependent oxidoreductase, glutathione peroxidase and glutathione S-transferase (GST) activity. The disulfide bond functions as an electron carrier in the glutathione-dependent synthesis of deoxyribonucleotides by the enzyme ribonucleotide reductase. In addition, it is also involved in reducing cytosolic protein- and non-protein-disulfides in a coupled system with glutathione reductase. Required for resistance to reactive oxygen species (ROS) by directly reducing hydroperoxides and for the detoxification of ROS-mediated damage. GRX1 is less active as an oxidoreductase than GRX2. This is Glutaredoxin-1 (GRX1) from Saccharomyces cerevisiae (strain ATCC 204508 / S288c) (Baker's yeast).